We begin with the raw amino-acid sequence, 312 residues long: Serine/threonine-protein kinase ppk11 (312 aa).

One can recognise a Protein kinase domain in the interval 6-258; the sequence is YRDLQLIGQG…AEYLSKHKFI (253 aa). Residues 12–20 and Lys35 contribute to the ATP site; that span reads IGQGSFGSV. Asp127 (proton acceptor) is an active-site residue.

The protein belongs to the protein kinase superfamily. Ser/Thr protein kinase family.

Its subcellular location is the cytoplasm. It localises to the nucleus. It catalyses the reaction L-seryl-[protein] + ATP = O-phospho-L-seryl-[protein] + ADP + H(+). It carries out the reaction L-threonyl-[protein] + ATP = O-phospho-L-threonyl-[protein] + ADP + H(+). The polypeptide is Serine/threonine-protein kinase ppk11 (ppk11) (Schizosaccharomyces pombe (strain 972 / ATCC 24843) (Fission yeast)).